A 379-amino-acid polypeptide reads, in one-letter code: Cytochrome b (379 aa).

Transmembrane regions (helical) follow at residues 33-53 (FGSL…FLAM), 77-98 (WLIR…FIHV), 113-133 (WNIG…GYVL), and 178-198 (FFAF…VHLL). Positions 83 and 97 each coordinate heme b. Histidine 182 and histidine 196 together coordinate heme b. Position 201 (histidine 201) interacts with a ubiquinone. Helical transmembrane passes span 226–246 (TKDL…ALFF), 288–308 (LGGV…PLLN), 320–340 (VTQV…WIGG), and 347–367 (FTTI…ILIP).

It belongs to the cytochrome b family. In terms of assembly, the cytochrome bc1 complex contains 11 subunits: 3 respiratory subunits (MT-CYB, CYC1 and UQCRFS1), 2 core proteins (UQCRC1 and UQCRC2) and 6 low-molecular weight proteins (UQCRH/QCR6, UQCRB/QCR7, UQCRQ/QCR8, UQCR10/QCR9, UQCR11/QCR10 and a cleavage product of UQCRFS1). This cytochrome bc1 complex then forms a dimer. It depends on heme b as a cofactor.

Its subcellular location is the mitochondrion inner membrane. Its function is as follows. Component of the ubiquinol-cytochrome c reductase complex (complex III or cytochrome b-c1 complex) that is part of the mitochondrial respiratory chain. The b-c1 complex mediates electron transfer from ubiquinol to cytochrome c. Contributes to the generation of a proton gradient across the mitochondrial membrane that is then used for ATP synthesis. In Akodon montensis (Montane grass mouse), this protein is Cytochrome b (MT-CYB).